A 249-amino-acid polypeptide reads, in one-letter code: MNKFDIENLDLYYGENQALKAINLPIPVRQVTALIGPSGCGKSTLLRCLNRMNDLIEGVKITGKLAMDGEDIYGNVDVADLRIKVGMVFQKPNPFPMSIYENVAYGLRAQGIKDKKHIDEVVERSLRGAALWDEVKDRLKSHAFGLSGGQQQRLCIARTIAMEPDVILMDEPTSALDPIATHKIEELMEELKKNYTIVIVTHSMQQARRISDRTAFFLMGELVEHNDTQVIFSEPSDDRTRGYVNGDFG.

The region spanning 4–244 is the ABC transporter domain; sequence FDIENLDLYY…PSDDRTRGYV (241 aa). 36–43 serves as a coordination point for ATP; it reads GPSGCGKS.

The protein belongs to the ABC transporter superfamily. Phosphate importer (TC 3.A.1.7) family. In terms of assembly, the complex is composed of two ATP-binding proteins (PstB), two transmembrane proteins (PstC and PstA) and a solute-binding protein (PstS).

The protein localises to the cell inner membrane. It carries out the reaction phosphate(out) + ATP + H2O = ADP + 2 phosphate(in) + H(+). Its function is as follows. Part of the ABC transporter complex PstSACB involved in phosphate import. Responsible for energy coupling to the transport system. The chain is Phosphate import ATP-binding protein PstB 2 from Vibrio vulnificus (strain CMCP6).